The following is a 254-amino-acid chain: Large ribosomal subunit protein uL4 (254 aa).

The disordered stretch occupies residues 45–70 (PWGNDPEAGKRTSAKGWGSGRGTARV).

The protein belongs to the universal ribosomal protein uL4 family. In terms of assembly, part of the 50S ribosomal subunit.

In terms of biological role, one of the primary rRNA binding proteins, this protein initially binds near the 5'-end of the 23S rRNA. It is important during the early stages of 50S assembly. It makes multiple contacts with different domains of the 23S rRNA in the assembled 50S subunit and ribosome. Functionally, forms part of the polypeptide exit tunnel. The chain is Large ribosomal subunit protein uL4 from Methanobrevibacter smithii (strain ATCC 35061 / DSM 861 / OCM 144 / PS).